A 340-amino-acid chain; its full sequence is Phenylalanine--tRNA ligase alpha subunit (340 aa).

Glu-255 provides a ligand contact to Mg(2+).

The protein belongs to the class-II aminoacyl-tRNA synthetase family. Phe-tRNA synthetase alpha subunit type 1 subfamily. As to quaternary structure, tetramer of two alpha and two beta subunits. It depends on Mg(2+) as a cofactor.

Its subcellular location is the cytoplasm. The enzyme catalyses tRNA(Phe) + L-phenylalanine + ATP = L-phenylalanyl-tRNA(Phe) + AMP + diphosphate + H(+). The protein is Phenylalanine--tRNA ligase alpha subunit of Desulfitobacterium hafniense (strain DSM 10664 / DCB-2).